The sequence spans 153 residues: 1,4-dihydroxy-2-naphthoyl-CoA hydrolase (153 aa).

Aspartate 21 is an active-site residue.

This sequence belongs to the 4-hydroxybenzoyl-CoA thioesterase family. DHNA-CoA hydrolase subfamily.

It carries out the reaction 1,4-dihydroxy-2-naphthoyl-CoA + H2O = 1,4-dihydroxy-2-naphthoate + CoA + H(+). It participates in cofactor biosynthesis; phylloquinone biosynthesis. The protein operates within quinol/quinone metabolism; 1,4-dihydroxy-2-naphthoate biosynthesis; 1,4-dihydroxy-2-naphthoate from chorismate: step 7/7. Catalyzes the hydrolysis of 1,4-dihydroxy-2-naphthoyl-CoA (DHNA-CoA) to 1,4-dihydroxy-2-naphthoate (DHNA), a reaction involved in phylloquinone (vitamin K1) biosynthesis. This is 1,4-dihydroxy-2-naphthoyl-CoA hydrolase from Synechococcus sp. (strain WH7803).